The following is a 177-amino-acid chain: MSRVAKAPVAIPAGVEVKLNGQEITVKGAKGELTRVLNDAVVIAQEENNLTFGPKEGAANAWAQAGTARALVNNMVVGVTEGFTKKLTLKGVGYRAAIKGNAVGLTLGFSHPVEHELPAGIKAECPSQTEIIITGCDKQLVGQVAADIRSYRQPEPYKGKGVRYADENVRTKEAKKK.

It belongs to the universal ribosomal protein uL6 family. Part of the 50S ribosomal subunit.

Its function is as follows. This protein binds to the 23S rRNA, and is important in its secondary structure. It is located near the subunit interface in the base of the L7/L12 stalk, and near the tRNA binding site of the peptidyltransferase center. The protein is Large ribosomal subunit protein uL6 of Vibrio campbellii (strain ATCC BAA-1116).